The primary structure comprises 550 residues: CTP synthase (550 aa).

Residues 1-270 (MTKYVFVTGG…DNIVCEALGL (270 aa)) form an amidoligase domain region. A CTP-binding site is contributed by Ser-13. Ser-13 serves as a coordination point for UTP. ATP is bound by residues 14-19 (SLGKGI) and Asp-71. Mg(2+) contacts are provided by Asp-71 and Glu-144. CTP is bound by residues 151–153 (DIE), 191–196 (KTKPTQ), and Lys-227. Residues 191–196 (KTKPTQ) and Lys-227 each bind UTP. The 251-residue stretch at 295–545 (TIGMVGKYVD…IRAALEHKAQ (251 aa)) folds into the Glutamine amidotransferase type-1 domain. An L-glutamine-binding site is contributed by Gly-356. Cys-383 functions as the Nucleophile; for glutamine hydrolysis in the catalytic mechanism. L-glutamine contacts are provided by residues 384 to 387 (LGMQ) and Glu-407. The segment at 430–459 (VERRDNSSDLGGTMRKGAQRCPIRPGTRAQ) is disordered. L-glutamine is bound at residue Arg-473. Active-site residues include His-518 and Glu-520.

This sequence belongs to the CTP synthase family. As to quaternary structure, homotetramer.

It carries out the reaction UTP + L-glutamine + ATP + H2O = CTP + L-glutamate + ADP + phosphate + 2 H(+). It catalyses the reaction L-glutamine + H2O = L-glutamate + NH4(+). The catalysed reaction is UTP + NH4(+) + ATP = CTP + ADP + phosphate + 2 H(+). Its pathway is pyrimidine metabolism; CTP biosynthesis via de novo pathway; CTP from UDP: step 2/2. Its activity is regulated as follows. Allosterically activated by GTP, when glutamine is the substrate; GTP has no effect on the reaction when ammonia is the substrate. The allosteric effector GTP functions by stabilizing the protein conformation that binds the tetrahedral intermediate(s) formed during glutamine hydrolysis. Inhibited by the product CTP, via allosteric rather than competitive inhibition. In terms of biological role, catalyzes the ATP-dependent amination of UTP to CTP with either L-glutamine or ammonia as the source of nitrogen. Regulates intracellular CTP levels through interactions with the four ribonucleotide triphosphates. The polypeptide is CTP synthase (Bordetella parapertussis (strain 12822 / ATCC BAA-587 / NCTC 13253)).